Reading from the N-terminus, the 456-residue chain is Enolase (456 aa).

(2R)-2-phosphoglycerate is bound at residue Gln-164. Glu-207 (proton donor) is an active-site residue. Positions 244, 287, and 314 each coordinate Mg(2+). The (2R)-2-phosphoglycerate site is built by Lys-339, Arg-368, Ser-369, and Lys-390. The active-site Proton acceptor is Lys-339.

The protein belongs to the enolase family. As to quaternary structure, component of the RNA degradosome, a multiprotein complex involved in RNA processing and mRNA degradation. The cofactor is Mg(2+).

It localises to the cytoplasm. The protein localises to the secreted. It is found in the cell surface. The catalysed reaction is (2R)-2-phosphoglycerate = phosphoenolpyruvate + H2O. The protein operates within carbohydrate degradation; glycolysis; pyruvate from D-glyceraldehyde 3-phosphate: step 4/5. Functionally, catalyzes the reversible conversion of 2-phosphoglycerate (2-PG) into phosphoenolpyruvate (PEP). It is essential for the degradation of carbohydrates via glycolysis. The sequence is that of Enolase from Francisella tularensis subsp. holarctica (strain LVS).